Here is a 781-residue protein sequence, read N- to C-terminus: MATQADLMELDMAMEPDRKAAVSHWQQQSYLDSGIHSGATTTAPSLSGKGNPEDEDVDTNQVLYEWEQGFSQSFTQDQVADIDGQYAMTRAQRVRAAMFPETLDEGMQIPSTQFDSAHPTNVQRLAEPSQMLKHAVVNLINYQDDAELATRAIPELTKLLNDEDQVVVNKAAVMVHQLSKKEASRHAIMRSPQMVSAIVRTMQNTNDVETARCTAGTLHNLSHHREGLLAIFKSGGIPALVKMLGSPVDSVLFYAITTLHNLLLHQEGAKMAVRLAGGLQKMVALLNKTNVKFLAITTDCLQILAYGNQESKLIILASGGPQALVNIMRTYSYEKLLWTTSRVLKVLSVCSSNKPAIVEAGGMQALGLHLTDSSQRLVQNCLWTLRNLSDAATKQEGMEGLLGTLVQLLGSDDINVVTCAAGILSNLTCNNYKNKMMVCQVGGIEALVRTVLRAGDREDITEPAICALRHLTSRHQEAEMAQNAVRLHYGLPVVVKLLHPPSHWPLIKATVGLIRNLALCPANHAPLREQGAIPRLVQLLVRAHQDTQRRTSIGGTQQQFVEGVRMEEIVEGCTGALHILARDIHNRIVIRGLNTIPLFVQLLYSPIENIQRVAAGVLCDVAQDKEAAEAIEAEGATAPLTELLHSRNEGVATYAAAVLFRMSEDKPQDYKKRLSVELTSSLFRTEPMPWNEAADLGLDIGAQGEPLGYRQDDSSYRSFHAAGYGQDAMGMDSMMDHDMGGHHPGADYPVDGLPDLSHAQDLMDGLPPGDSNQLAWFDTDL.

The disordered stretch occupies residues 34–56 (GIHSGATTTAPSLSGKGNPEDED). ARM repeat units lie at residues 141 to 180 (NYQD…QLSK), 225 to 264 (REGL…NLLL), 267 to 306 (EGAK…ILAY), 351 to 390 (SSNK…NLSD), 391 to 429 (AATK…NLTC), 432 to 473 (YKNK…HLTS), 479 to 519 (EMAQ…NLAL), 521 to 562 (PANH…QFVE), 584 to 623 (IHNR…DVAQ), and 625 to 664 (KEAA…RMSE). Basic and acidic residues predominate over residues 735-745 (MDHDMGGHHPG). Residues 735–781 (MDHDMGGHHPGADYPVDGLPDLSHAQDLMDGLPPGDSNQLAWFDTDL) form a disordered region.

This sequence belongs to the beta-catenin family. In terms of assembly, interacts with EP-Cadherin/CDH3. Interacts with custos; the interaction is positively regulated by Wnt stimulation. In terms of processing, phosphorylation by gsk3b promotes ubiquitination and subsequent degradation by the proteasome. Post-translationally, ubiquitinated when phosphorylated by gsk3b, leading to its degradation. As to expression, expressed at intercalated disks in the heart (at protein level).

Its subcellular location is the cytoplasm. The protein resides in the nucleus. It localises to the cell membrane. Key downstream component of the canonical Wnt signaling pathway. In the absence of Wnt, forms a complex with axin1, axin2, apc, csnk1a1 and gsk3b that promotes phosphorylation on N-terminal Ser and Thr residues and ubiquitination of ctnnb1 and its subsequent degradation by the proteasome. In the presence of Wnt ligand, ctnnb1 is not ubiquitinated and accumulates in the nucleus, where it acts as a coactivator for transcription factors of the TCF/LEF family, leading to activate Wnt responsive genes. Plays a key role in dorsoventral patterning: in prospective ventral blastomeres, its down-regulation by axin1 and axin2 leads to inhibit the Wnt signaling pathway, while in prospective dorsal blastomeres, degradation of axin results in stabilization and nuclear translocation of ctnnb1. This is Catenin beta-1 from Xenopus laevis (African clawed frog).